Reading from the N-terminus, the 356-residue chain is Putative zinc finger protein At1g68190 (356 aa).

Cysteine 14, cysteine 17, cysteine 37, histidine 42, cysteine 57, cysteine 60, cysteine 80, and histidine 85 together coordinate Zn(2+). Residues 14–56 form a B box-type 1; atypical zinc finger; the sequence is CEFCKAYRAVVYCIADTANLCLTCDAKVHSANSLSGRHLRTVL. A B box-type 2; atypical zinc finger spans residues 57–97; the sequence is CDSCKNQPCVVRCFDHKMFLCHGCNDKFHGGGSSEHRRRDL. Positions 159 to 178 are disordered; it reads ENGSSSLTERGDPSPLELPK.

Belongs to the CONSTANS family.

It is found in the nucleus. This chain is Putative zinc finger protein At1g68190, found in Arabidopsis thaliana (Mouse-ear cress).